The following is a 496-amino-acid chain: MAGEITETGELYSPYVGLVYMFNLIVGTGALTMPKAFATAGWLVSLVLLVFVGFMSFVTTTFAMEAMAAANAQLRWKRMETHKEEDDEDSSTASDSDLLSQDNYERAEKRPILSVQRRSSANLFEITDRVEMGQMASMFFNKVGVNLFYFCIITYLYGDLAIYAAAVPVSLMQVTCSVSGNDSCGVDTDARYNDTDLCWGPLRRVDVYRIYLAIFTVLLGPFTFFDVQKTKYLQILTSMMRWIAFAIMIVLALVRIGKGQGEGHPPLANFLGVQNLFGVCVYSFMCQHSLPSLITPISSKRHITRLLFLDYALILAFYGLLSFTAIFCFRGDSLMDMYTLNFARCDVVGLAAVRFFLGLFPVFTISTNFPIIAVTLRNNWKTLFHREGGTYPWVVDRVVFPTITLVPPILVAFCTHDLESLVAITGAYAGTGIQYVIPAFLVYLCRKDTQLTFGYGTVNKHRSPFRHTFWVAFVLLWAFSCFFFVTAYIVLKETQL.

The Cytoplasmic segment spans residues 1 to 10 (MAGEITETGE). The helical transmembrane segment at 11–31 (LYSPYVGLVYMFNLIVGTGAL) threads the bilayer. Residues 32–36 (TMPKA) lie on the Extracellular side of the membrane. A helical membrane pass occupies residues 37–57 (FATAGWLVSLVLLVFVGFMSF). Over 58–146 (VTTTFAMEAM…SMFFNKVGVN (89 aa)) the chain is Cytoplasmic. The disordered stretch occupies residues 81–100 (THKEEDDEDSSTASDSDLLS). A compositionally biased stretch (low complexity) spans 91–100 (STASDSDLLS). The chain crosses the membrane as a helical span at residues 147–167 (LFYFCIITYLYGDLAIYAAAV). Topologically, residues 168–204 (PVSLMQVTCSVSGNDSCGVDTDARYNDTDLCWGPLRR) are extracellular. N193 carries N-linked (GlcNAc...) asparagine glycosylation. The helical transmembrane segment at 205-225 (VDVYRIYLAIFTVLLGPFTFF) threads the bilayer. Residues 226-233 (DVQKTKYL) lie on the Cytoplasmic side of the membrane. Residues 234 to 254 (QILTSMMRWIAFAIMIVLALV) form a helical membrane-spanning segment. Residues 255–265 (RIGKGQGEGHP) are Extracellular-facing. A helical membrane pass occupies residues 266–286 (PLANFLGVQNLFGVCVYSFMC). Topologically, residues 287 to 306 (QHSLPSLITPISSKRHITRL) are cytoplasmic. A helical membrane pass occupies residues 307 to 327 (LFLDYALILAFYGLLSFTAIF). At 328-354 (CFRGDSLMDMYTLNFARCDVVGLAAVR) the chain is on the extracellular side. The chain crosses the membrane as a helical span at residues 355–375 (FFLGLFPVFTISTNFPIIAVT). Residues 376–397 (LRNNWKTLFHREGGTYPWVVDR) lie on the Cytoplasmic side of the membrane. The chain crosses the membrane as a helical span at residues 398–418 (VVFPTITLVPPILVAFCTHDL). Residues 419-421 (ESL) lie on the Extracellular side of the membrane. Residues 422–442 (VAITGAYAGTGIQYVIPAFLV) form a helical membrane-spanning segment. Topologically, residues 443 to 470 (YLCRKDTQLTFGYGTVNKHRSPFRHTFW) are cytoplasmic. A helical transmembrane segment spans residues 471 to 491 (VAFVLLWAFSCFFFVTAYIVL). The Extracellular portion of the chain corresponds to 492–496 (KETQL).

Belongs to the TMEM104 family.

The protein resides in the membrane. The protein is Transmembrane protein 104 (Tmem104) of Mus musculus (Mouse).